We begin with the raw amino-acid sequence, 301 residues long: XIAP-associated factor 1 (301 aa).

Residues 22–99 form a TRAF-type zinc finger; the sequence is LHEAYCLRFL…KLDMQLSKLE (78 aa). The tract at residues 189–257 is disordered; it reads ILPSSLPSQA…KPRTSSPRGD (69 aa). Residues 193–205 show a composition bias toward polar residues; the sequence is SLPSQAAENQTST.

Interacts with BIRC4; the interaction is not detected in. Interacts with BIRC1, BIRC2, BIRC3, BIRC7 and BIRC8. Part of an complex consisting of BIRC4, XAF1 and BIRC5; the complex formation requires IFN-beta stimulation. Interacts with RNF114, the interaction increases XAF1 stability and proapoptotic effects, and may regulate IFN signaling. In terms of tissue distribution, widely expressed. Expression is frequently down-regulated in cancer cell lines. Isoform 5 is widely expressed. Expressed in placenta (at protein level).

Its subcellular location is the cytoplasm. The protein localises to the nucleus. It localises to the mitochondrion. In terms of biological role, seems to function as a negative regulator of members of the IAP (inhibitor of apoptosis protein) family. Inhibits anti-caspase activity of BIRC4. Induces cleavage and inactivation of BIRC4 independent of caspase activation. Mediates TNF-alpha-induced apoptosis and is involved in apoptosis in trophoblast cells. May inhibit BIRC4 indirectly by activating the mitochondrial apoptosis pathway. After translocation to mitochondria, promotes translocation of BAX to mitochondria and cytochrome c release from mitochondria. Seems to promote the redistribution of BIRC4 from the cytoplasm to the nucleus, probably independent of BIRC4 inactivation which seems to occur in the cytoplasm. The BIRC4-XAF1 complex mediates down-regulation of BIRC5/survivin; the process requires the E3 ligase activity of BIRC4. Seems to be involved in cellular sensitivity to the proapoptotic actions of TRAIL. May be a tumor suppressor by mediating apoptosis resistance of cancer cells. In Homo sapiens (Human), this protein is XIAP-associated factor 1 (XAF1).